The chain runs to 186 residues: dCTP deaminase (186 aa).

A dCTP-binding site is contributed by 107-112; that stretch reads KSTYAR. Residue Glu133 is the Proton donor/acceptor of the active site. DCTP-binding residues include Gln152, Tyr166, and Gln176.

This sequence belongs to the dCTP deaminase family. In terms of assembly, homotrimer.

It carries out the reaction dCTP + H2O + H(+) = dUTP + NH4(+). It participates in pyrimidine metabolism; dUMP biosynthesis; dUMP from dCTP (dUTP route): step 1/2. Catalyzes the deamination of dCTP to dUTP. In Campylobacter jejuni subsp. doylei (strain ATCC BAA-1458 / RM4099 / 269.97), this protein is dCTP deaminase.